We begin with the raw amino-acid sequence, 620 residues long: 1-deoxy-D-xylulose-5-phosphate synthase (620 aa).

Thiamine diphosphate-binding positions include His80 and 121–123 (GHS). Residue Asp152 participates in Mg(2+) binding. Thiamine diphosphate is bound by residues 153–154 (GA), Asn181, Tyr288, and Glu370. A Mg(2+)-binding site is contributed by Asn181.

The protein belongs to the transketolase family. DXPS subfamily. As to quaternary structure, homodimer. Mg(2+) serves as cofactor. Requires thiamine diphosphate as cofactor.

The enzyme catalyses D-glyceraldehyde 3-phosphate + pyruvate + H(+) = 1-deoxy-D-xylulose 5-phosphate + CO2. It functions in the pathway metabolic intermediate biosynthesis; 1-deoxy-D-xylulose 5-phosphate biosynthesis; 1-deoxy-D-xylulose 5-phosphate from D-glyceraldehyde 3-phosphate and pyruvate: step 1/1. Its function is as follows. Catalyzes the acyloin condensation reaction between C atoms 2 and 3 of pyruvate and glyceraldehyde 3-phosphate to yield 1-deoxy-D-xylulose-5-phosphate (DXP). The chain is 1-deoxy-D-xylulose-5-phosphate synthase from Escherichia coli O7:K1 (strain IAI39 / ExPEC).